The primary structure comprises 86 residues: Muscarinic toxin 38 (86 aa).

Positions 1–21 (MKTLLLTLVVVTIVCLDLGYT) are cleaved as a signal peptide. Cystine bridges form between Cys-24–Cys-45, Cys-38–Cys-63, Cys-67–Cys-78, and Cys-79–Cys-84.

The protein belongs to the three-finger toxin family. Short-chain subfamily. Aminergic toxin sub-subfamily. Monomer. As to expression, expressed by the venom gland.

Its subcellular location is the secreted. In terms of biological role, binds to the muscarinic acetylcholine receptor (CHRM). This is Muscarinic toxin 38 from Ophiophagus hannah (King cobra).